The primary structure comprises 265 residues: 4-hydroxy-tetrahydrodipicolinate reductase (265 aa).

NAD(+) is bound by residues 7–12 (GASGRM), Asp33, 96–98 (GTT), and 120–123 (AANM). His153 functions as the Proton donor/acceptor in the catalytic mechanism. His154 lines the (S)-2,3,4,5-tetrahydrodipicolinate pocket. Lys157 (proton donor) is an active-site residue. 163 to 164 (GT) serves as a coordination point for (S)-2,3,4,5-tetrahydrodipicolinate.

Belongs to the DapB family.

It localises to the cytoplasm. The catalysed reaction is (S)-2,3,4,5-tetrahydrodipicolinate + NAD(+) + H2O = (2S,4S)-4-hydroxy-2,3,4,5-tetrahydrodipicolinate + NADH + H(+). It catalyses the reaction (S)-2,3,4,5-tetrahydrodipicolinate + NADP(+) + H2O = (2S,4S)-4-hydroxy-2,3,4,5-tetrahydrodipicolinate + NADPH + H(+). The protein operates within amino-acid biosynthesis; L-lysine biosynthesis via DAP pathway; (S)-tetrahydrodipicolinate from L-aspartate: step 4/4. Catalyzes the conversion of 4-hydroxy-tetrahydrodipicolinate (HTPA) to tetrahydrodipicolinate. The chain is 4-hydroxy-tetrahydrodipicolinate reductase from Cupriavidus metallidurans (strain ATCC 43123 / DSM 2839 / NBRC 102507 / CH34) (Ralstonia metallidurans).